The sequence spans 333 residues: Ketol-acid reductoisomerase (NADP(+)) (333 aa).

A KARI N-terminal Rossmann domain is found at Met1–Thr179. Residues Tyr22–Gln25, Lys45, Ser48, Ser50, and Asp80–Gln83 contribute to the NADP(+) site. Residue His105 is part of the active site. Residue Gly131 coordinates NADP(+). One can recognise a KARI C-terminal knotted domain in the interval Thr180–Val325. Positions 188, 192, 224, and 228 each coordinate Mg(2+). Position 249 (Ser249) interacts with substrate.

Belongs to the ketol-acid reductoisomerase family. Mg(2+) is required as a cofactor.

It catalyses the reaction (2R)-2,3-dihydroxy-3-methylbutanoate + NADP(+) = (2S)-2-acetolactate + NADPH + H(+). It carries out the reaction (2R,3R)-2,3-dihydroxy-3-methylpentanoate + NADP(+) = (S)-2-ethyl-2-hydroxy-3-oxobutanoate + NADPH + H(+). Its pathway is amino-acid biosynthesis; L-isoleucine biosynthesis; L-isoleucine from 2-oxobutanoate: step 2/4. It functions in the pathway amino-acid biosynthesis; L-valine biosynthesis; L-valine from pyruvate: step 2/4. Its function is as follows. Involved in the biosynthesis of branched-chain amino acids (BCAA). Catalyzes an alkyl-migration followed by a ketol-acid reduction of (S)-2-acetolactate (S2AL) to yield (R)-2,3-dihydroxy-isovalerate. In the isomerase reaction, S2AL is rearranged via a Mg-dependent methyl migration to produce 3-hydroxy-3-methyl-2-ketobutyrate (HMKB). In the reductase reaction, this 2-ketoacid undergoes a metal-dependent reduction by NADPH to yield (R)-2,3-dihydroxy-isovalerate. This is Ketol-acid reductoisomerase (NADP(+)) from Mycobacterium bovis (strain ATCC BAA-935 / AF2122/97).